A 549-amino-acid chain; its full sequence is Acetyl-coenzyme A transporter 1 (549 aa).

Residues 1-12 show a composition bias toward basic and acidic residues; that stretch reads MSPTISHKDSSR. Positions 1 to 46 are disordered; the sequence is MSPTISHKDSSRQRRPGNFSHSLDMKSGPLPPGGWDDSHLDSAGRE. The Cytoplasmic segment spans residues 1–74; the sequence is MSPTISHKDS…PQSFRAELSS (74 aa). Ser-22 and Ser-42 each carry phosphoserine. Residues 36-46 are compositionally biased toward basic and acidic residues; the sequence is DDSHLDSAGRE. Residues 75–95 traverse the membrane as a helical segment; it reads ILLLLFLYVLQGIPLGLAGSI. Residues 96–113 lie on the Extracellular side of the membrane; the sequence is PLILQSKNVSYTDQAFFS. N-linked (GlcNAc...) asparagine glycosylation occurs at Asn-103. Residues 114–134 traverse the membrane as a helical segment; that stretch reads FVFWPFSLKLLWAPLVDAVYV. The Cytoplasmic segment spans residues 135 to 141; it reads KNFGRRK. The chain crosses the membrane as a helical span at residues 142–162; the sequence is SWLVPTQYILGLFMIYLSTQV. Topologically, residues 163-175 are extracellular; that stretch reads DRLLGNTDDRTPD. Residues 176 to 196 form a helical membrane-spanning segment; sequence VIALTVAFFLFEFLAATQDIA. Topologically, residues 197–217 are cytoplasmic; it reads VDGWALTMLSRENVGYASTCN. Residues 218–238 traverse the membrane as a helical segment; sequence SVGQTAGYFLGNVLFLALESA. The Extracellular portion of the chain corresponds to 239–256; it reads DFCNKYLRFQPQPRGIVT. The chain crosses the membrane as a helical span at residues 257-277; it reads LSDFLFFWGTVFLITTTLVAL. The Cytoplasmic segment spans residues 278–299; the sequence is LKKENEVSVVKEETQGITDTYK. Residues 300-320 traverse the membrane as a helical segment; the sequence is LLFAIIKMPAVLTFCLLILTA. Topologically, residues 321 to 343 are extracellular; it reads KIGFSAADAVTGLKLVEEGVPKE. A helical membrane pass occupies residues 344 to 364; it reads HLALLAVPMVPLQIILPLIIS. The Cytoplasmic segment spans residues 365-378; that stretch reads KYTAGPQPLNTFYK. A helical membrane pass occupies residues 379-398; that stretch reads AMPYRLLLGLEYALLVWWTP. The Extracellular segment spans residues 399–404; sequence KVEHQG. Residues 405 to 425 traverse the membrane as a helical segment; the sequence is GFPIYYYIVVLLSYALHQVTV. Over 426-508 the chain is Cytoplasmic; the sequence is YSMYVSIMAF…LGGSCVTALD (83 aa). Residues 509–529 traverse the membrane as a helical segment; it reads GYYVESIICVFIGFGWWFFLG. Over 530 to 549 the chain is Extracellular; that stretch reads PKFKKLQDEGSSSWKCKRNN.

This sequence belongs to the SLC33A transporter family. As to quaternary structure, homodimerizes. Ubiquitous. Detected in heart, brain, placenta, lung, liver, skeletal muscle, kidney and pancreas. With strongest signals in pancreas.

The protein resides in the endoplasmic reticulum membrane. It catalyses the reaction acetyl-CoA(in) = acetyl-CoA(out). Functionally, acetyl-CoA transporter that mediates active acetyl-CoA import through the endoplasmic reticulum (ER) membrane into the ER lumen where specific ER-based acetyl-CoA:lysine acetyltransferases are responsible for the acetylation of ER-based protein substrates, such as BACE1. Necessary for O-acetylation of gangliosides. The polypeptide is Acetyl-coenzyme A transporter 1 (Homo sapiens (Human)).